A 622-amino-acid chain; its full sequence is MDATPYTTSSTSTALDSPSSLSATMARRWARKLERYCCTCVTYFPLAFVYSMTSWAAYVDVSLSTTPSRVTWLGHSYGFIAVVLYLLANWCYTYAVFTSPGSTTNEYGYSTLPTQAPPTATSFTVKSNGEFRFCKKCQARKPDRAHHCSTCRRCVLKMDHHCPWLATCVGLRNHKAFLLFLIYTSVFCWVSFAGSASWVWEEIMSNTTYVETLMPVNYIMLSVISGIIGIVLSAFCGWHIYLASRGQTTIECLEKTRYLSPLRESMQRTYVNQHTPGQGIALPKYGQQLLDIHQNTIPGVTRPEEGEEMRRMTTPSGSSQRNDLASQHNPELQAGSRRFTYDEMEHIRARKRYEDYLDEQDSTKLPHAFDLGTPRNLLHLFGTNAWLWPFPVCTTIGDGWSWEPNPKWIEARDRIAREREEQRQRERQAGWGPADDDDITPVYTPTWTPPNQQHPQGGAGRHYLQPSSQPQTQRNSNSSSPSFTPSRRTPSKADRILGRDPNMYADDEPVIYGKHDVAMSRLSPAGRTLVVEDDVLNDDDDDDEDYFQDAGRKQEDAEQSALNVVTNGRWGRPAGASGVGLLAHGRPGGARSPISPISPPARGFGGSAKNGEEGRSNDDGVD.

Over 1 to 38 (MDATPYTTSSTSTALDSPSSLSATMARRWARKLERYCC) the chain is Cytoplasmic. The chain crosses the membrane as a helical span at residues 39–59 (TCVTYFPLAFVYSMTSWAAYV). The Vacuolar portion of the chain corresponds to 60–76 (DVSLSTTPSRVTWLGHS). A helical transmembrane segment spans residues 77 to 97 (YGFIAVVLYLLANWCYTYAVF). Topologically, residues 98 to 175 (TSPGSTTNEY…ATCVGLRNHK (78 aa)) are cytoplasmic. One can recognise a DHHC domain in the interval 132–182 (RFCKKCQARKPDRAHHCSTCRRCVLKMDHHCPWLATCVGLRNHKAFLLFLI). The helical transmembrane segment at 176–196 (AFLLFLIYTSVFCWVSFAGSA) threads the bilayer. Residues 197–217 (SWVWEEIMSNTTYVETLMPVN) are Vacuolar-facing. The helical transmembrane segment at 218 to 238 (YIMLSVISGIIGIVLSAFCGW) threads the bilayer. The Cytoplasmic portion of the chain corresponds to 239 to 622 (HIYLASRGQT…EGRSNDDGVD (384 aa)). 3 disordered regions span residues 298–334 (PGVT…ELQA), 419–507 (REEQ…YADD), and 533–622 (DDVL…DGVD). Basic and acidic residues predominate over residues 302-311 (RPEEGEEMRR). The segment covering 313–330 (TTPSGSSQRNDLASQHNP) has biased composition (polar residues). A compositionally biased stretch (basic and acidic residues) spans 419–428 (REEQRQRERQ). Residues 443–455 (YTPTWTPPNQQHP) show a composition bias toward polar residues. The segment covering 466–488 (PSSQPQTQRNSNSSSPSFTPSRR) has biased composition (low complexity). Over residues 533-547 (DDVLNDDDDDDEDYF) the composition is skewed to acidic residues. Positions 610–622 (NGEEGRSNDDGVD) are enriched in basic and acidic residues.

This sequence belongs to the DHHC palmitoyltransferase family. PFA3 subfamily. In terms of processing, autopalmitoylated.

The protein localises to the vacuole membrane. The enzyme catalyses L-cysteinyl-[protein] + hexadecanoyl-CoA = S-hexadecanoyl-L-cysteinyl-[protein] + CoA. Functionally, palmitoyltransferase specific for vac8. Palmitoylates vac8 at one or more of its N-terminal cysteine residues, which is required for its proper membrane localization. The protein is Palmitoyltransferase pfa3 (ptr-3) of Neurospora crassa (strain ATCC 24698 / 74-OR23-1A / CBS 708.71 / DSM 1257 / FGSC 987).